A 546-amino-acid chain; its full sequence is MTPGEVRRLYFIIRTFLSYGLDELIPKMRITLPLRLWRYSLFWMPNRHKDKPLGERLRLALQELGPVWIKFGQMLSTRRDLFPPHIADQLALLQDKVAPFDGKLAKQQIEAAMGGLPVEAWFDDFEIKPLASASIAQVHTARLKSNGKEVVIKVIRPDILPVIKADLKLIYRLARWVPRLLPDGRRLRPTEVVREYEKTLIDELNLLRESANAIQLRRNFEDSPMLYIPEVYPDYCSEGMMVMERIYGIPVSDVATLEKNGTNMKLLAERGVQVFFTQVFRDSFFHADMHPGNIFVSYEHPENPKYIGIDCGIVGSLNKEDKRYLAENFIAFFNRDYRKVAELHVDSGWVPPDTNVEEFEFAIRTVCEPIFEKPLAEISFGHVLLNLFNTARRFNMEVQPQLVLLQKTLLYVEGVGRQLYPQLDLWKTAKPFLESWIKDQVGIPALVRAFKEKAPFWVEKMPELPELVYDSLRQGKYLQHSVDKIARELQSNHVRQGQSRYFLGIGATLVLSGTFLLVSRPEWGLMPVWLMAGGLIAWFVGWRKTR.

Positions 124 to 502 (DFEIKPLASA…HVRQGQSRYF (379 aa)) constitute a Protein kinase domain. ATP contacts are provided by residues 130-138 (LASASIAQV) and Lys-153. Asp-288 (proton acceptor) is an active-site residue. 2 helical membrane-spanning segments follow: residues 501–521 (YFLG…VSRP) and 522–542 (EWGL…FVGW).

The protein belongs to the ABC1 family. UbiB subfamily.

It localises to the cell inner membrane. It functions in the pathway cofactor biosynthesis; ubiquinone biosynthesis [regulation]. In terms of biological role, is probably a protein kinase regulator of UbiI activity which is involved in aerobic coenzyme Q (ubiquinone) biosynthesis. In Escherichia coli (strain SMS-3-5 / SECEC), this protein is Probable protein kinase UbiB.